The sequence spans 331 residues: Isopenicillin N synthase (331 aa).

4 residues coordinate isopenicillin N: Arg87, Tyr91, Ser183, and Tyr189. Residues Arg87, Tyr91, Ser183, Tyr189, His214, and Asp216 each contribute to the N-[(5S)-5-amino-5-carboxypentanoyl]-L-cysteinyl-D-valine site. Residues 176–288 (KPDDTLASVV…RQSLPFFVNL (113 aa)) enclose the Fe2OG dioxygenase domain. Fe(2+)-binding residues include His214, Asp216, and His270. Arg279 provides a ligand contact to 2-oxoglutarate. Ser281 is an isopenicillin N binding site. N-[(5S)-5-amino-5-carboxypentanoyl]-L-cysteinyl-D-valine is bound at residue Ser281.

It belongs to the iron/ascorbate-dependent oxidoreductase family. Monomer. It depends on Fe(2+) as a cofactor.

The protein localises to the cytoplasm. Its subcellular location is the cytosol. The enzyme catalyses N-[(5S)-5-amino-5-carboxypentanoyl]-L-cysteinyl-D-valine + O2 = isopenicillin N + 2 H2O. The protein operates within antibiotic biosynthesis; penicillin G biosynthesis; penicillin G from L-alpha-aminoadipate and L-cysteine and L-valine: step 2/3. Isopenicillin N synthase; part of the gene cluster that mediates the biosynthesis of penicillin, the world's most important antibiotic. IpnA catalyzes the cyclization of the tripeptide N-[(5S)-5-amino-5-carboxypentanoyl]-L-cysteinyl-D-valine (LLD-ACV or ACV) to form isopenicillin N (IPN) that contains the beta-lactam nucleus. The penicillin biosynthesis occurs via 3 enzymatic steps, the first corresponding to the production of the tripeptide N-[(5S)-5-amino-5-carboxypentanoyl]-L-cysteinyl-D-valine (LLD-ACV or ACV) by the NRPS acvA. The tripeptide ACV is then cyclized to isopenicillin N (IPN) by the isopenicillin N synthase ipnA that forms the beta-lactam nucleus. Finally, the alpha-aminoadipyl side chain is exchanged for phenylacetic acid by the isopenicillin N acyltransferase penDE to yield penicillin in the peroxisomal matrix. The protein is Isopenicillin N synthase of Emericella nidulans (strain FGSC A4 / ATCC 38163 / CBS 112.46 / NRRL 194 / M139) (Aspergillus nidulans).